Reading from the N-terminus, the 440-residue chain is Nitrilase and fragile histidine triad fusion protein NitFhit (440 aa).

Residues 14-264 (RHFIAVCQMT…VDMCFAEIDL (251 aa)) form the CN hydrolase domain. Catalysis depends on residues glutamate 54, lysine 127, and cysteine 169. The HIT domain maps to 297-405 (GGLKFARFNI…LPRRAGDFGD (109 aa)). The short motif at 390-394 (HVHIH) is the Histidine triad motif element. Histidine 392 (tele-AMP-histidine intermediate) is an active-site residue.

It in the N-terminal section; belongs to the UPF0012 family. As to quaternary structure, homotetramer. Requires Mn(2+) as cofactor.

It carries out the reaction P(1),P(3)-bis(5'-adenosyl) triphosphate + H2O = AMP + ADP + 2 H(+). Its function is as follows. Cleaves A-5'-PPP-5'A to yield AMP and ADP. The sequence is that of Nitrilase and fragile histidine triad fusion protein NitFhit from Caenorhabditis elegans.